The primary structure comprises 388 residues: UTP--glucose-1-phosphate uridylyltransferase (388 aa).

Asp-118 is a Mg(2+) binding site.

This sequence belongs to the CugP-type UDP-glucose pyrophosphorylase family. Requires Mg(2+) as cofactor.

It catalyses the reaction alpha-D-glucose 1-phosphate + UTP + H(+) = UDP-alpha-D-glucose + diphosphate. Catalyzes the formation of UDP-glucose, from UTP and glucose 1-phosphate. Is highly specific since it cannot use other NTPs such as dTTP, CTP, ATP, and GTP, and other sugar-1P such as GlcNAc-1P, Gal-1P, and Man-1P, as substrates. Has probably a central and essential role as the substrate supplier for galactolipid synthesis; galactolipids are major constituents of the photosynthetic thylakoid membrane and important for photosynthetic activity. This chain is UTP--glucose-1-phosphate uridylyltransferase, found in Synechocystis sp. (strain ATCC 27184 / PCC 6803 / Kazusa).